The chain runs to 397 residues: Tryptophan synthase beta chain (397 aa).

K87 bears the N6-(pyridoxal phosphate)lysine mark.

It belongs to the TrpB family. As to quaternary structure, tetramer of two alpha and two beta chains. It depends on pyridoxal 5'-phosphate as a cofactor.

The enzyme catalyses (1S,2R)-1-C-(indol-3-yl)glycerol 3-phosphate + L-serine = D-glyceraldehyde 3-phosphate + L-tryptophan + H2O. Its pathway is amino-acid biosynthesis; L-tryptophan biosynthesis; L-tryptophan from chorismate: step 5/5. Its function is as follows. The beta subunit is responsible for the synthesis of L-tryptophan from indole and L-serine. The polypeptide is Tryptophan synthase beta chain (Escherichia coli O139:H28 (strain E24377A / ETEC)).